The sequence spans 327 residues: Vacuolar protein sorting-associated protein 26A (327 aa).

Positions 306–327 (RTNFHQRFESPESQASAEQPEM) are disordered. S315 carries the post-translational modification Phosphoserine. A compositionally biased stretch (polar residues) spans 316–327 (PESQASAEQPEM).

It belongs to the VPS26 family. As to quaternary structure, component of the heterotrimeric retromer cargo-selective complex (CSC), also described as vacuolar protein sorting subcomplex (VPS), formed by VPS26 (VPS26A or VPS26B), VPS29 and VPS35. The CSC has a highly elongated structure with VPS26 and VPS29 binding independently at opposite distal ends of VPS35 as central platform. The CSC is believed to associate with variable sorting nexins to form functionally distinct retromer complex variants. The originally described retromer complex (also called SNX-BAR retromer) is a pentamer containing the CSC and a heterodimeric membrane-deforming subcomplex formed between SNX1 or SNX2 and SNX5 or SNX6 (also called SNX-BAR subcomplex); the respective CSC and SNX-BAR subcomplexes associate with low affinity. The CSC associates with SNX3 to form a SNX3-retromer complex. The CSC associates with SNX27, the WASH complex and the SNX-BAR subcomplex to form the SNX27-retromer complex. Interacts with VPS29, VPS35, SNX27, SNX1, SNX2, SNX5, SNX6, SNX3, RAB7A, ECPAS, EHD1, WASHC5, SORL1.

It is found in the cytoplasm. The protein localises to the endosome membrane. The protein resides in the early endosome. Functionally, acts as a component of the retromer cargo-selective complex (CSC). The CSC is believed to be the core functional component of retromer or respective retromer complex variants acting to prevent missorting of selected transmembrane cargo proteins into the lysosomal degradation pathway. The recruitment of the CSC to the endosomal membrane involves RAB7A and SNX3. The SNX-BAR retromer mediates retrograde transport of cargo proteins from endosomes to the trans-Golgi network (TGN) and is involved in endosome-to-plasma membrane transport for cargo protein recycling. The SNX3-retromer mediates the retrograde endosome-to-TGN transport of WLS distinct from the SNX-BAR retromer pathway. The SNX27-retromer is believed to be involved in endosome-to-plasma membrane trafficking and recycling of a broad spectrum of cargo proteins. The CSC complex seems to act as recruitment hub for other proteins, such as the WASH complex and TBC1D5. Required for retrograde transport of lysosomal enzyme receptor IGF2R. Required to regulate transcytosis of the polymeric immunoglobulin receptor (pIgR-pIgA). Required for the endosomal localization of WASHC2 (indicative for the WASH complex). Required for the endosomal localization of TBC1D5. Mediates retromer cargo recognition of SORL1 and is involved in trafficking of SORL1 implicated in sorting and processing of APP. Involved in retromer-independent lysosomal sorting of F2R. Involved in recycling of ADRB2. Acts redundantly with VSP26B in SNX-27 mediated endocytic recycling of SLC2A1/GLUT1. Enhances the affinity of SNX27 for PDZ-binding motifs in cargo proteins. In Rattus norvegicus (Rat), this protein is Vacuolar protein sorting-associated protein 26A (Vps26a).